The following is a 1358-amino-acid chain: DNA-directed RNA polymerase subunit beta (1358 aa).

It belongs to the RNA polymerase beta chain family. The RNAP catalytic core consists of 2 alpha, 1 beta, 1 beta' and 1 omega subunit. When a sigma factor is associated with the core the holoenzyme is formed, which can initiate transcription.

It catalyses the reaction RNA(n) + a ribonucleoside 5'-triphosphate = RNA(n+1) + diphosphate. Functionally, DNA-dependent RNA polymerase catalyzes the transcription of DNA into RNA using the four ribonucleoside triphosphates as substrates. The sequence is that of DNA-directed RNA polymerase subunit beta from Chromohalobacter salexigens (strain ATCC BAA-138 / DSM 3043 / CIP 106854 / NCIMB 13768 / 1H11).